The sequence spans 454 residues: Pup--protein ligase (454 aa).

E9 contacts Mg(2+). ATP is bound at residue R53. Y55 contributes to the Mg(2+) binding site. D57 serves as the catalytic Proton acceptor. E63 lines the Mg(2+) pocket. T66 and W421 together coordinate ATP.

Belongs to the Pup ligase/Pup deamidase family. Pup-conjugating enzyme subfamily.

It catalyses the reaction ATP + [prokaryotic ubiquitin-like protein]-L-glutamate + [protein]-L-lysine = ADP + phosphate + N(6)-([prokaryotic ubiquitin-like protein]-gamma-L-glutamyl)-[protein]-L-lysine.. The protein operates within protein degradation; proteasomal Pup-dependent pathway. It participates in protein modification; protein pupylation. Its function is as follows. Catalyzes the covalent attachment of the prokaryotic ubiquitin-like protein modifier Pup to the proteasomal substrate proteins, thereby targeting them for proteasomal degradation. This tagging system is termed pupylation. The ligation reaction involves the side-chain carboxylate of the C-terminal glutamate of Pup and the side-chain amino group of a substrate lysine. The protein is Pup--protein ligase of Frankia casuarinae (strain DSM 45818 / CECT 9043 / HFP020203 / CcI3).